A 283-amino-acid chain; its full sequence is Thymidylate synthase (283 aa).

Position 22 (R22) interacts with dUMP. The Nucleophile role is filled by C160. DUMP is bound by residues R180–D183, N191, and H221–Y223. Residue D183 coordinates (6R)-5,10-methylene-5,6,7,8-tetrahydrofolate. Position 282 (S282) interacts with (6R)-5,10-methylene-5,6,7,8-tetrahydrofolate.

This sequence belongs to the thymidylate synthase family. Bacterial-type ThyA subfamily. As to quaternary structure, homodimer.

Its subcellular location is the cytoplasm. It catalyses the reaction dUMP + (6R)-5,10-methylene-5,6,7,8-tetrahydrofolate = 7,8-dihydrofolate + dTMP. It functions in the pathway pyrimidine metabolism; dTTP biosynthesis. Catalyzes the reductive methylation of 2'-deoxyuridine-5'-monophosphate (dUMP) to 2'-deoxythymidine-5'-monophosphate (dTMP) while utilizing 5,10-methylenetetrahydrofolate (mTHF) as the methyl donor and reductant in the reaction, yielding dihydrofolate (DHF) as a by-product. This enzymatic reaction provides an intracellular de novo source of dTMP, an essential precursor for DNA biosynthesis. The polypeptide is Thymidylate synthase (Histophilus somni (strain 129Pt) (Haemophilus somnus)).